A 1732-amino-acid polypeptide reads, in one-letter code: Serine/threonine-protein kinase MRCK alpha (1732 aa).

The Protein kinase domain maps to 77–343; sequence FEILKVIGRG…IEDFKKHPFF (267 aa). ATP contacts are provided by residues 83–91 and lysine 106; that span reads IGRGAFGEV. Aspartate 201 functions as the Proton acceptor in the catalytic mechanism. A phosphoserine; by autocatalysis mark is found at serine 222 and serine 234. The residue at position 240 (threonine 240) is a Phosphothreonine; by autocatalysis. The AGC-kinase C-terminal domain maps to 344-414; sequence SGIDWDNIRN…TSSCVLSDRS (71 aa). 2 coiled-coil regions span residues 437–820 and 880–943; these read NNLA…WEAQ and LELQ…SEKG. Positions 968-1003 are disordered; the sequence is ERSPSCTPASKGRRTVDSTPLSVHTPTLRKKGCPGS. The Phorbol-ester/DAG-type zinc-finger motif lies at 1012-1062; that stretch reads THQFFVKSFTTPTKCHQCTSLMVGLIRQGCSCEVCGFSCHITCVNKAPTTC. Residues 1082 to 1201 enclose the PH domain; sequence GTAYEGHVRI…WVGVLSELHK (120 aa). Serine 1127 carries the phosphoserine modification. The region spanning 1227–1499 is the CNH domain; that stretch reads IKTTQAAAII…RPLNNEGSLN (273 aa). Serine 1545 is modified (phosphoserine). In terms of domain architecture, CRIB spans 1571 to 1584; sequence ISNPTNFNHIAHMG. Residues 1591–1732 are disordered; that stretch reads ILKDLPMNPR…ESTDRGSWDP (142 aa). A compositionally biased stretch (polar residues) spans 1604–1619; that stretch reads SRTVFSGSVSIPSITK. A phosphoserine mark is found at serine 1611, serine 1613, serine 1629, serine 1651, serine 1664, serine 1669, and serine 1693. Low complexity predominate over residues 1625–1640; sequence GRSMSASSGLSARSSA. The span at 1665 to 1674 shows a compositional bias: low complexity; the sequence is PSEGSLSSGG. Over residues 1697-1707 the composition is skewed to low complexity; the sequence is STASNSSNLSS. Serine 1719 and serine 1721 each carry phosphoserine.

It belongs to the protein kinase superfamily. AGC Ser/Thr protein kinase family. DMPK subfamily. Homodimer and homotetramer via the coiled coil regions. Interacts tightly with GTP-bound but not GDP-bound CDC42. Forms a tripartite complex with MYO18A and LURAP1 with the latter acting as an adapter connecting CDC42BPA and MYO18A. LURAP1 binding results in activation of CDC42BPA by abolition of its negative autoregulation. Interacts with LURAP1. Interacts (via AGC-kinase C-terminal domain) with FAM89B/LRAP25 (via LRR repeat). Forms a tripartite complex with FAM89B/LRAP25 and LIMK1. The cofactor is Mg(2+). In terms of processing, proteolytically cleaved by caspases upon apoptosis induction. The cleavage at Asp-478 by CASP3 increases its kinase activity (in vitro). In terms of tissue distribution, abundant in the heart, brain, skeletal muscle, kidney, and pancreas, with little or no expression in the lung and liver.

It localises to the cytoplasm. It is found in the cell projection. Its subcellular location is the lamellipodium. It carries out the reaction L-seryl-[protein] + ATP = O-phospho-L-seryl-[protein] + ADP + H(+). The enzyme catalyses L-threonyl-[protein] + ATP = O-phospho-L-threonyl-[protein] + ADP + H(+). Its activity is regulated as follows. Maintained in an inactive, closed conformation by an interaction between the kinase domain and the negative autoregulatory C-terminal coiled-coil region. Agonist binding to the phorbol ester binding site disrupts this, releasing the kinase domain to allow N-terminus-mediated dimerization and kinase activation by transautophosphorylation. Inhibited by chelerythrine chloride. Functionally, serine/threonine-protein kinase which is an important downstream effector of CDC42 and plays a role in the regulation of cytoskeleton reorganization and cell migration. Regulates actin cytoskeletal reorganization via phosphorylation of PPP1R12C and MYL9/MLC2. In concert with MYO18A and LURAP1, is involved in modulating lamellar actomyosin retrograde flow that is crucial to cell protrusion and migration. Phosphorylates: PPP1R12A, LIMK1 and LIMK2. May play a role in TFRC-mediated iron uptake. In concert with FAM89B/LRAP25 mediates the targeting of LIMK1 to the lamellipodium resulting in its activation and subsequent phosphorylation of CFL1 which is important for lamellipodial F-actin regulation. Triggers the formation of an extrusion apical actin ring required for epithelial extrusion of apoptotic cells. This Homo sapiens (Human) protein is Serine/threonine-protein kinase MRCK alpha.